A 258-amino-acid polypeptide reads, in one-letter code: Thiazole synthase 2 (258 aa).

Lys-97 functions as the Schiff-base intermediate with DXP in the catalytic mechanism. Residues Gly-158, 184 to 185 (AG), and 206 to 207 (NT) each bind 1-deoxy-D-xylulose 5-phosphate.

This sequence belongs to the ThiG family. Homotetramer. Forms heterodimers with either ThiH or ThiS.

Its subcellular location is the cytoplasm. It catalyses the reaction [ThiS sulfur-carrier protein]-C-terminal-Gly-aminoethanethioate + 2-iminoacetate + 1-deoxy-D-xylulose 5-phosphate = [ThiS sulfur-carrier protein]-C-terminal Gly-Gly + 2-[(2R,5Z)-2-carboxy-4-methylthiazol-5(2H)-ylidene]ethyl phosphate + 2 H2O + H(+). Its pathway is cofactor biosynthesis; thiamine diphosphate biosynthesis. Catalyzes the rearrangement of 1-deoxy-D-xylulose 5-phosphate (DXP) to produce the thiazole phosphate moiety of thiamine. Sulfur is provided by the thiocarboxylate moiety of the carrier protein ThiS. In vitro, sulfur can be provided by H(2)S. This chain is Thiazole synthase 2, found in Syntrophotalea carbinolica (strain DSM 2380 / NBRC 103641 / GraBd1) (Pelobacter carbinolicus).